An 85-amino-acid chain; its full sequence is uncharacterized protein (85 aa).

Transmembrane regions (helical) follow at residues 20 to 42 and 52 to 69; these read IYWF…TTFL and IILR…KHYY.

Its subcellular location is the membrane. This is an uncharacterized protein from Saccharomyces cerevisiae (strain ATCC 204508 / S288c) (Baker's yeast).